The following is a 320-amino-acid chain: Acetyl-coenzyme A carboxylase carboxyl transferase subunit alpha (320 aa).

In terms of domain architecture, CoA carboxyltransferase C-terminal spans 33–294 (AFESEIQALR…GDAVEDELKA (262 aa)).

It belongs to the AccA family. As to quaternary structure, acetyl-CoA carboxylase is a heterohexamer composed of biotin carboxyl carrier protein (AccB), biotin carboxylase (AccC) and two subunits each of ACCase subunit alpha (AccA) and ACCase subunit beta (AccD).

The protein resides in the cytoplasm. It carries out the reaction N(6)-carboxybiotinyl-L-lysyl-[protein] + acetyl-CoA = N(6)-biotinyl-L-lysyl-[protein] + malonyl-CoA. Its pathway is lipid metabolism; malonyl-CoA biosynthesis; malonyl-CoA from acetyl-CoA: step 1/1. Component of the acetyl coenzyme A carboxylase (ACC) complex. First, biotin carboxylase catalyzes the carboxylation of biotin on its carrier protein (BCCP) and then the CO(2) group is transferred by the carboxyltransferase to acetyl-CoA to form malonyl-CoA. The protein is Acetyl-coenzyme A carboxylase carboxyl transferase subunit alpha of Caulobacter sp. (strain K31).